Here is a 335-residue protein sequence, read N- to C-terminus: DNA-directed RNA polymerase subunit alpha (335 aa).

The segment at 1–233 (MMLNATEFLT…QQISIFVDLE (233 aa)) is alpha N-terminal domain (alpha-NTD). The segment at 247 to 335 (VDPVLLRPVD…VDDRFSYRSR (89 aa)) is alpha C-terminal domain (alpha-CTD).

The protein belongs to the RNA polymerase alpha chain family. In terms of assembly, homodimer. The RNAP catalytic core consists of 2 alpha, 1 beta, 1 beta' and 1 omega subunit. When a sigma factor is associated with the core the holoenzyme is formed, which can initiate transcription.

The enzyme catalyses RNA(n) + a ribonucleoside 5'-triphosphate = RNA(n+1) + diphosphate. In terms of biological role, DNA-dependent RNA polymerase catalyzes the transcription of DNA into RNA using the four ribonucleoside triphosphates as substrates. The chain is DNA-directed RNA polymerase subunit alpha from Psychrobacter arcticus (strain DSM 17307 / VKM B-2377 / 273-4).